Consider the following 518-residue polypeptide: Serine incorporator 4 (518 aa).

10 consecutive transmembrane segments (helical) span residues 59 to 79 (CSRL…CLLL), 122 to 142 (VCAG…HLHS), 153 to 173 (SFWL…FCIP), 184 to 204 (IGIC…TAFA), 222 to 242 (FLAV…GAVL), 259 to 279 (LLSL…APCI), 286 to 306 (SGLL…FSAL), 338 to 357 (ISLA…FACN), 427 to 447 (AFHF…TNWF), and 470 to 490 (VASC…PLCW).

It belongs to the TDE1 family.

It localises to the membrane. Its function is as follows. Incorporates a polar amino acid serine into membranes and facilitates the synthesis of two serine-derived lipids, phosphatidylserine and sphingolipids. The polypeptide is Serine incorporator 4 (SERINC4) (Homo sapiens (Human)).